A 64-amino-acid polypeptide reads, in one-letter code: Large ribosomal subunit protein bL35 (64 aa).

The span at 1–26 shows a compositional bias: basic residues; the sequence is MPKMKSHRGASKRFKRTASGKLKRSH. Residues 1-42 are disordered; sequence MPKMKSHRGASKRFKRTASGKLKRSHAYTSHLFANKSTKAKR.

This sequence belongs to the bacterial ribosomal protein bL35 family.

The polypeptide is Large ribosomal subunit protein bL35 (Exiguobacterium sp. (strain ATCC BAA-1283 / AT1b)).